A 348-amino-acid polypeptide reads, in one-letter code: Probable dual-specificity RNA methyltransferase RlmN (348 aa).

Catalysis depends on Glu-90, which acts as the Proton acceptor. Residues 96 to 324 form the Radical SAM core domain; the sequence is AAERLTVCVS…ASVRHTRGLE (229 aa). The cysteines at positions 103 and 329 are disulfide-linked. 3 residues coordinate [4Fe-4S] cluster: Cys-110, Cys-114, and Cys-117. S-adenosyl-L-methionine-binding positions include 157–158, Ser-187, 210–212, and Asn-286; these read GE and SLH. The active-site S-methylcysteine intermediate is Cys-329.

It belongs to the radical SAM superfamily. RlmN family. [4Fe-4S] cluster is required as a cofactor.

It localises to the cytoplasm. It catalyses the reaction adenosine(2503) in 23S rRNA + 2 reduced [2Fe-2S]-[ferredoxin] + 2 S-adenosyl-L-methionine = 2-methyladenosine(2503) in 23S rRNA + 5'-deoxyadenosine + L-methionine + 2 oxidized [2Fe-2S]-[ferredoxin] + S-adenosyl-L-homocysteine. It carries out the reaction adenosine(37) in tRNA + 2 reduced [2Fe-2S]-[ferredoxin] + 2 S-adenosyl-L-methionine = 2-methyladenosine(37) in tRNA + 5'-deoxyadenosine + L-methionine + 2 oxidized [2Fe-2S]-[ferredoxin] + S-adenosyl-L-homocysteine. In terms of biological role, specifically methylates position 2 of adenine 2503 in 23S rRNA and position 2 of adenine 37 in tRNAs. The polypeptide is Probable dual-specificity RNA methyltransferase RlmN (Gloeobacter violaceus (strain ATCC 29082 / PCC 7421)).